The primary structure comprises 265 residues: Ribosomal RNA small subunit methyltransferase A (265 aa).

Residues H13, L15, G40, E62, D87, and N106 each contribute to the S-adenosyl-L-methionine site.

It belongs to the class I-like SAM-binding methyltransferase superfamily. rRNA adenine N(6)-methyltransferase family. RsmA subfamily.

The protein localises to the cytoplasm. The enzyme catalyses adenosine(1518)/adenosine(1519) in 16S rRNA + 4 S-adenosyl-L-methionine = N(6)-dimethyladenosine(1518)/N(6)-dimethyladenosine(1519) in 16S rRNA + 4 S-adenosyl-L-homocysteine + 4 H(+). Specifically dimethylates two adjacent adenosines (A1518 and A1519) in the loop of a conserved hairpin near the 3'-end of 16S rRNA in the 30S particle. May play a critical role in biogenesis of 30S subunits. This Persephonella marina (strain DSM 14350 / EX-H1) protein is Ribosomal RNA small subunit methyltransferase A.